The following is a 196-amino-acid chain: dITP/XTP pyrophosphatase (196 aa).

10-15 is a binding site for substrate; sequence TTNPHK. D68 functions as the Proton acceptor in the catalytic mechanism. Position 68 (D68) interacts with Mg(2+). Residues S69, 148-151, and 175-176 contribute to the substrate site; these read FGYD and HR.

The protein belongs to the HAM1 NTPase family. As to quaternary structure, homodimer. Mg(2+) is required as a cofactor.

The catalysed reaction is XTP + H2O = XMP + diphosphate + H(+). The enzyme catalyses dITP + H2O = dIMP + diphosphate + H(+). It carries out the reaction ITP + H2O = IMP + diphosphate + H(+). Its function is as follows. Pyrophosphatase that catalyzes the hydrolysis of nucleoside triphosphates to their monophosphate derivatives, with a high preference for the non-canonical purine nucleotides XTP (xanthosine triphosphate), dITP (deoxyinosine triphosphate) and ITP. Seems to function as a house-cleaning enzyme that removes non-canonical purine nucleotides from the nucleotide pool, thus preventing their incorporation into DNA/RNA and avoiding chromosomal lesions. The sequence is that of dITP/XTP pyrophosphatase from Thermotoga maritima (strain ATCC 43589 / DSM 3109 / JCM 10099 / NBRC 100826 / MSB8).